A 149-amino-acid chain; its full sequence is uncharacterized protein (149 aa).

The next 3 membrane-spanning stretches (helical) occupy residues 39–61 (VPLG…LIIG), 82–104 (VFGY…GAIL), and 119–141 (WMMM…SIYL).

This sequence to M.pneumoniae MPN_090.

It localises to the cell membrane. This is an uncharacterized protein from Mycoplasma pneumoniae (strain ATCC 29342 / M129 / Subtype 1) (Mycoplasmoides pneumoniae).